The following is a 481-amino-acid chain: Ammonium transporter 2 member 3 (481 aa).

The Extracellular portion of the chain corresponds to 1-36 (MNFNSSKYISHLPESLLPNDASPEWNNKADNAWQLT). Asn-4 carries an N-linked (GlcNAc...) asparagine glycan. A helical transmembrane segment spans residues 37–57 (AATLVGLQTVPGLVILYGSMV). At 58-62 (KKKWA) the chain is on the cytoplasmic side. The chain crosses the membrane as a helical span at residues 63-83 (VNSAFMALYAFAAVLVCWVLW). Residues 84–123 (AHHMAFGTKLLPFVGKPNFALSQKFLLSKASTNYYLPMAD) are Extracellular-facing. A helical transmembrane segment spans residues 124–144 (FVFYQFAFAAITLVLLGGSLL). Topologically, residues 145-151 (GRMNFYA) are cytoplasmic. A helical membrane pass occupies residues 152 to 172 (WMLFVPLWLTLSYTVGAFTIW). The Extracellular portion of the chain corresponds to 173-184 (GNGFLEGKIIDY). The chain crosses the membrane as a helical span at residues 185–205 (AGGFVIHLSSGVAGFTAAYWV). The Cytoplasmic segment spans residues 206 to 220 (GPRTSNDRQNFPPNN). Residues 221–241 (IIHMLGGAGFLWMGWTGFNGG) traverse the membrane as a helical segment. Topologically, residues 242–248 (APFQVGE) are extracellular. A helical transmembrane segment spans residues 249 to 269 (ITSLAIFNTHLCTATSILVWI). Residues 270–281 (SLDMAVYKKGSL) lie on the Cytoplasmic side of the membrane. A helical membrane pass occupies residues 282–302 (IGSVQGMMTGLVCITPGAGLV). Residues 303 to 304 (DP) lie on the Extracellular side of the membrane. The chain crosses the membrane as a helical span at residues 305-325 (WAAILMGALSGSIPWYTMMVL). Over 326–338 (HKKSPFFQSVDDT) the chain is Cytoplasmic. The helical transmembrane segment at 339–359 (LGVFHTHAVAGILGGILSGVF) threads the bilayer. The Extracellular segment spans residues 360-363 (AKPK). Residues 364–381 (LLRILYGPYGSGLLYSYF) traverse the membrane as a helical segment. At 382 to 395 (DDNIGQGIKQMWYQ) the chain is on the cytoplasmic side. A helical membrane pass occupies residues 396–416 (LLGAVFITIWNVVITSLICIL). Topologically, residues 417–481 (LNRFVNLRMQ…HSFPINKIDE (65 aa)) are extracellular.

Belongs to the ammonia transporter channel (TC 1.A.11.2) family. In terms of tissue distribution, mostly expressed in mycorrhizal roots. Also observed in the cortex and endodermis of non-mycorrhizal roots.

The protein localises to the cell membrane. Functionally, involved in ammonium transport. Required for arbuscular mycorrhizal (AM) symbiosis with AM fungi (e.g. Glomus versiforme and G.intraradices) in low nitrogen conditions. In Medicago truncatula (Barrel medic), this protein is Ammonium transporter 2 member 3.